The primary structure comprises 345 residues: MTTTGYIGTYTKKEGKGVYRFQLDEETGKITEVKTGYELEASTYVNQHNHFLYAVTKEGDDCGIASLKIESDGTLSLINKCLASTAGNGCYVSASPDGKYIFEAIYGAGLARIYEANPETGEIVRLIQELAHDYPTGPSERQEQPHVHYLNTTPDEKYVVAMDLGTDKVITYEYGDDGLKVYDTIEFEPGDGPRHITFHENGKHAYVVHELSNIVSTLKYENGHFTEIERHLTIPENFDGDTKLAAVRISHDQNFLYISNRGHDSLAIFKVGDEGATISLVDIVKSGGEFPRDFNITESDDYLVCAHQEGDYALTVFKRDKVTGNIEIVDNQETAPEGVCVQFLR.

The protein belongs to the cycloisomerase 2 family.

This is an uncharacterized protein from Staphylococcus saprophyticus subsp. saprophyticus (strain ATCC 15305 / DSM 20229 / NCIMB 8711 / NCTC 7292 / S-41).